Consider the following 420-residue polypeptide: Glucose-1-phosphate adenylyltransferase (420 aa).

Alpha-D-glucose 1-phosphate contacts are provided by residues Tyr107, Gly173, Glu188 to Lys189, and Ser206.

It belongs to the bacterial/plant glucose-1-phosphate adenylyltransferase family. As to quaternary structure, homotetramer.

The enzyme catalyses alpha-D-glucose 1-phosphate + ATP + H(+) = ADP-alpha-D-glucose + diphosphate. The protein operates within glycan biosynthesis; glycogen biosynthesis. Involved in the biosynthesis of ADP-glucose, a building block required for the elongation reactions to produce glycogen. Catalyzes the reaction between ATP and alpha-D-glucose 1-phosphate (G1P) to produce pyrophosphate and ADP-Glc. In Shewanella baltica (strain OS185), this protein is Glucose-1-phosphate adenylyltransferase.